An 805-amino-acid polypeptide reads, in one-letter code: Endonuclease MutS2 (805 aa).

344-351 lines the ATP pocket; sequence GPNGGGKT. Residues 705–724 form a disordered region; sequence RSRSEKLQAASEARPSAPPG. Residues 729–804 form the Smr domain; that stretch reads LDVRGLRVEE…GDAVTVVSLR (76 aa).

This sequence belongs to the DNA mismatch repair MutS family. MutS2 subfamily. As to quaternary structure, homodimer. Binds to stalled ribosomes, contacting rRNA.

Endonuclease that is involved in the suppression of homologous recombination and thus may have a key role in the control of bacterial genetic diversity. Functionally, acts as a ribosome collision sensor, splitting the ribosome into its 2 subunits. Detects stalled/collided 70S ribosomes which it binds and splits by an ATP-hydrolysis driven conformational change. Acts upstream of the ribosome quality control system (RQC), a ribosome-associated complex that mediates the extraction of incompletely synthesized nascent chains from stalled ribosomes and their subsequent degradation. Probably generates substrates for RQC. The polypeptide is Endonuclease MutS2 (Anaeromyxobacter sp. (strain Fw109-5)).